Reading from the N-terminus, the 632-residue chain is Myrcene synthase TPS3FN, chloroplastic (632 aa).

The N-terminal 55 residues, 1–55 (MHCMAVHQFSPSIVSSLPTISTYNNNHFCRFFTPKTSISPISKTKSKSSTCYPIQ), are a transit peptide targeting the chloroplast. (2E)-geranyl diphosphate contacts are provided by R343, D380, D384, R524, and D527. Mg(2+) contacts are provided by D380 and D384. Positions 380 to 384 (DDIYD) match the DDXXD motif motif. Mg(2+)-binding residues include D527, T531, and E535.

This sequence belongs to the terpene synthase family. Tpsb subfamily. The cofactor is Mg(2+). It depends on Mn(2+) as a cofactor. In terms of tissue distribution, expressed in glandular trichomes two to four weeks after flowering onset.

The protein resides in the plastid. The protein localises to the chloroplast. The enzyme catalyses (2E)-geranyl diphosphate = beta-myrcene + diphosphate. It functions in the pathway secondary metabolite biosynthesis; terpenoid biosynthesis. Involved in monoterpene (C10) olefins biosynthesis, constituants of cannabinoids and terpenoids-rich resins. Catalyzes strictly the conversion of (2E)-geranyl diphosphate to beta-myrcene. The protein is Myrcene synthase TPS3FN, chloroplastic of Cannabis sativa (Hemp).